A 194-amino-acid polypeptide reads, in one-letter code: A-type ATP synthase subunit E (194 aa).

The protein belongs to the V-ATPase E subunit family. In terms of assembly, has multiple subunits with at least A(3), B(3), C, D, E, F, H, I and proteolipid K(x).

It is found in the cell membrane. Its function is as follows. Component of the A-type ATP synthase that produces ATP from ADP in the presence of a proton gradient across the membrane. This is A-type ATP synthase subunit E from Haloferax volcanii (strain ATCC 29605 / DSM 3757 / JCM 8879 / NBRC 14742 / NCIMB 2012 / VKM B-1768 / DS2) (Halobacterium volcanii).